Here is a 498-residue protein sequence, read N- to C-terminus: Ribulose bisphosphate carboxylase large chain (498 aa).

A propeptide spanning residues 1 to 2 (MS) is cleaved from the precursor. Proline 3 carries the N-acetylproline modification. The residue at position 14 (lysine 14) is an N6,N6,N6-trimethyllysine. Residues asparagine 123 and threonine 173 each coordinate substrate. The Proton acceptor role is filled by lysine 175. Substrate is bound at residue lysine 177. Lysine 201, aspartate 203, and glutamate 204 together coordinate Mg(2+). Position 201 is an N6-carboxylysine (lysine 201). The active-site Proton acceptor is the histidine 294. The substrate site is built by arginine 295, histidine 327, and serine 379. The segment at 473 to 498 (DTLDPNDKKQRDNEDTLADKFFGDKG) is disordered.

The protein belongs to the RuBisCO large chain family. Type I subfamily. In terms of assembly, heterohexadecamer of 8 large chains and 8 small chains; disulfide-linked. The disulfide link is formed within the large subunit homodimers. Mg(2+) serves as cofactor. In terms of processing, the disulfide bond which can form in the large chain dimeric partners within the hexadecamer appears to be associated with oxidative stress and protein turnover.

The protein localises to the plastid. The enzyme catalyses 2 (2R)-3-phosphoglycerate + 2 H(+) = D-ribulose 1,5-bisphosphate + CO2 + H2O. It catalyses the reaction D-ribulose 1,5-bisphosphate + O2 = 2-phosphoglycolate + (2R)-3-phosphoglycerate + 2 H(+). Functionally, ruBisCO catalyzes two reactions: the carboxylation of D-ribulose 1,5-bisphosphate, the primary event in carbon dioxide fixation, as well as the oxidative fragmentation of the pentose substrate in the photorespiration process. Both reactions occur simultaneously and in competition at the same active site. The chain is Ribulose bisphosphate carboxylase large chain from Cuscuta exaltata (Tall dodder).